Consider the following 122-residue polypeptide: Small ribosomal subunit protein uS13 (122 aa).

Over residues 97-114 (PVRGQRTHTNAKTRKGKS) the composition is skewed to basic residues. Positions 97–122 (PVRGQRTHTNAKTRKGKSRLPIAGKE) are disordered.

Belongs to the universal ribosomal protein uS13 family. Part of the 30S ribosomal subunit. Forms a loose heterodimer with protein S19. Forms two bridges to the 50S subunit in the 70S ribosome.

Located at the top of the head of the 30S subunit, it contacts several helices of the 16S rRNA. In the 70S ribosome it contacts the 23S rRNA (bridge B1a) and protein L5 of the 50S subunit (bridge B1b), connecting the 2 subunits; these bridges are implicated in subunit movement. Contacts the tRNAs in the A and P-sites. In Wolbachia sp. subsp. Brugia malayi (strain TRS), this protein is Small ribosomal subunit protein uS13.